The following is a 687-amino-acid chain: Adhesion G-protein coupled receptor G1 (687 aa).

A signal peptide spans 1–25 (MTAQSLLQTTLFLLSLLFLVQGAHG). A heparin-binding site is contributed by 26-33 (RGHREDFR). The Extracellular portion of the chain corresponds to 26–402 (RGHREDFRFC…VEVDAVHKHY (377 aa)). Intrachain disulfides connect C35/C91 and C121/C177. N-linked (GlcNAc...) asparagine glycosylation is found at N39, N148, and N171. Residue 190 to 200 (LKHPQKASRRP) participates in heparin binding. The GAIN-B domain maps to 224–395 (DTVSFEEDRI…AVLMVSSVEV (172 aa)). 4 N-linked (GlcNAc...) asparagine glycosylation sites follow: N234, N303, N324, and N341. Disulfide bonds link C346/C377 and C366/C379. Positions 346–395 (CVFWVEDPTLSSPGHWSSAGCETVRRETQTSCFCNHLTYFAVLMVSSVEV) are GPS. The segment at 384-397 (YFAVLMVSSVEVDA) is stachel. Residues 403–423 (LSLLSYVGCVVSALACIVTIA) traverse the membrane as a helical segment. At 424–442 (AYLCSRRKPRDYTIKVHMN) the chain is on the cytoplasmic side. A helical membrane pass occupies residues 443-463 (LLLAVFLLDTSFLLSEPVALT). Over 464–470 (GSEAGCR) the chain is Extracellular. The helical transmembrane segment at 471-491 (ASAIFLHFSLLACLSWMGLEG) threads the bilayer. Residues 492–512 (YNLYRLVVEVFGTYVPGYLLK) lie on the Cytoplasmic side of the membrane. Residues 513 to 533 (LSAMGWGFPIFLVTLVALVDV) form a helical membrane-spanning segment. At 534-570 (DNYGPIILAVHRTPEGVIYPSMCWIRDSLVSYITNLG) the chain is on the extracellular side. A helical transmembrane segment spans residues 571–591 (LFSLVFLFNMAMLATMVVQIL). Over 592–603 (RLRPHTQKWSHV) the chain is Cytoplasmic. A helical membrane pass occupies residues 604 to 624 (LTLLGLSLVLGLPWALIFFSF). Residues 625–630 (ASGTFQ) lie on the Extracellular side of the membrane. The chain crosses the membrane as a helical span at residues 631–651 (LVVLYLFSIITSFQGFLIFIW). Over 652-687 (YWSMRLQARGGPSPLKSNSDSARLPISSGSTSSSRI) the chain is Cytoplasmic. The interval 664 to 687 (SPLKSNSDSARLPISSGSTSSSRI) is disordered. The span at 678–687 (SSGSTSSSRI) shows a compositional bias: low complexity.

It belongs to the G-protein coupled receptor 2 family. LN-TM7 subfamily. In terms of assembly, heterodimer of 2 chains generated by proteolytic processing; the large extracellular N-terminal fragment (ADGRG1 NT) and the membrane-bound C-terminal fragment (ADGRG1-CT) predominantly remain associated and non-covalently linked. ADGRG1 NT self-associates in a trans-trans manner; the homophilic interaction enhances receptor signaling. Interacts with TGM2. Interacts with heparin; leading to the reduction of ADGRG1 shedding. Interacts with COL3A1. Part of a GPCR-tetraspanin complex at least consisting of ADGRG1, CD81, eventually CD9, and GNA11 in which CD81 is enhancing the association of ADGRG1 with GNA11. Autoproteolytically cleaved into 2 fragments; the large extracellular N-terminal fragment (ADGRG1 NT) and the membrane-bound C-terminal fragment (ADGRG1 CT) predominantly remain associated and non-covalently linked. Shedding to yield the secreted ADGRG1 N-terminal fragment seems to involve metalloprotease(s). Post-translationally, ubiquitinated. Undergoes polyubiquitination upon activation.

It is found in the cell membrane. The protein localises to the secreted. The protein resides in the membrane raft. Forms a heterodimer of 2 chains generated by proteolytic processing that remain associated through non-covalent interactions mediated by the GAIN-B domain. In the inactivated receptor, the Stachel sequence (also named stalk) is embedded in the GAIN-B domain, where it adopts a beta-strand conformation. On activation, the Stachel moves into the 7 transmembrane region and adopts a twisted hook-shaped configuration that forms contacts within the receptor, leading to coupling of a G-alpha protein, which activates signaling. The cleaved GAIN-B and N-terminal domains can then dissociate from the rest of the receptor. Its function is as follows. Adhesion G-protein coupled receptor (aGPCR) for steroid hormone 17alpha-hydroxypregnenolone (17-OH), which is involved in cell adhesion and cell-cell interactions. Ligand binding causes a conformation change that triggers signaling via guanine nucleotide-binding proteins (G proteins) and modulates the activity of downstream effectors, such as RhoA pathway. ADGRG1 is coupled to G(12) and/or G(13) G proteins (GNA12 and GNA13, respectively) and mediates the activation Rho small GTPases. Acts as a potent suppressor of ferroptosis: binding to 17-OH-binding initiates signaling that down-regulates CD36 and alleviates ferroptosis-induced liver injury. Ligand-binding also induces cell adhesion activity via association with proteins such as collagen III/COL3A1 and TGM2. Mediates cell matrix adhesion in developing neurons and hematopoietic stem cells. Involved in cortical development, specifically in maintenance of the pial basement membrane integrity and in cortical lamination: association with COL3A1 in the developing brain inhibits neuronal migration via activation of the RhoA pathway. Together with TGM2, acts as a regulator of myelination and myelin repair in oligodendrocyte precursor cells. Acts as a hemostatic sensor of shear force: G protein-coupled receptor signaling is activated in response to shear force in platelets, promoting G(13) G protein signaling, and platelet shape change and aggregation in a COL3A1-dependent manner. Acts as an inhibitor of VEGFA production thereby inhibiting angiogenesis through a signaling pathway mediated by PRKCA. Plays a role in the maintenance of hematopoietic stem cells in bone marrow niche. Plays an essential role in testis development. This Gorilla gorilla gorilla (Western lowland gorilla) protein is Adhesion G-protein coupled receptor G1 (ADGRG1).